The following is a 475-amino-acid chain: 3-hydroxyacyl-CoA dehydrogenase-like protein LAM1 (475 aa).

99–104 (GTRPFA) contacts NAD(+). Lys-149 contacts CoA. Asn-245 contacts NAD(+).

The protein belongs to the 3-hydroxyacyl-CoA dehydrogenase family.

The protein operates within mycotoxin biosynthesis. In terms of biological role, 3-hydroxyacyl-CoA dehydrogenase-like protein; part of the Tox1A locus, one of the 2 loci that mediate the biosynthesis of T-toxin, a family of linear polyketides 37 to 45 carbons in length, of which the major component is 41 carbons, and which leads to high virulence to maize. One of the PKSs (PKS1 or PKS2) could synthesize a precursor, used subsequently by the other PKS as starter unit, to add additional carbons. Variability in the length of the final carbon backbone C35-47 could be achieved by varying the number of condensation cycles, or use of different starter or extender units or might be due to decarboxylation of the penultimate product, catalyzed by DEC1. Additional proteins are required for the biosynthesis of T-toxin, including oxidoreductases RED1, RED2, RED3, LAM1 and OXI1, as well as esterase TOX9. The sequence is that of 3-hydroxyacyl-CoA dehydrogenase-like protein LAM1 from Cochliobolus heterostrophus (strain C4 / ATCC 48331 / race T) (Southern corn leaf blight fungus).